We begin with the raw amino-acid sequence, 417 residues long: Serine hydroxymethyltransferase (417 aa).

Residues Leu121 and 125-127 (GHL) each bind (6S)-5,6,7,8-tetrahydrofolate. The residue at position 229 (Lys229) is an N6-(pyridoxal phosphate)lysine. 355 to 357 (SPF) is a binding site for (6S)-5,6,7,8-tetrahydrofolate.

The protein belongs to the SHMT family. As to quaternary structure, homodimer. It depends on pyridoxal 5'-phosphate as a cofactor.

It localises to the cytoplasm. The enzyme catalyses (6R)-5,10-methylene-5,6,7,8-tetrahydrofolate + glycine + H2O = (6S)-5,6,7,8-tetrahydrofolate + L-serine. It participates in one-carbon metabolism; tetrahydrofolate interconversion. Its pathway is amino-acid biosynthesis; glycine biosynthesis; glycine from L-serine: step 1/1. Its function is as follows. Catalyzes the reversible interconversion of serine and glycine with tetrahydrofolate (THF) serving as the one-carbon carrier. This reaction serves as the major source of one-carbon groups required for the biosynthesis of purines, thymidylate, methionine, and other important biomolecules. Also exhibits THF-independent aldolase activity toward beta-hydroxyamino acids, producing glycine and aldehydes, via a retro-aldol mechanism. The protein is Serine hydroxymethyltransferase of Citrobacter koseri (strain ATCC BAA-895 / CDC 4225-83 / SGSC4696).